A 107-amino-acid polypeptide reads, in one-letter code: Anaphase-promoting complex subunit 14 (107 aa).

As to quaternary structure, the APC/C is composed of at least 13 subunits: apc1, apc2, nuc2, apc4, apc5, cut9, apc8, apc10, apc11, hcn1, apc13, apc14 and apc15.

The protein resides in the ascus epiplasm. In terms of biological role, component of the anaphase promoting complex/cyclosome (APC/C), a cell cycle-regulated E3 ubiquitin-protein ligase complex that controls progression through mitosis and the G1 phase of the cell cycle. The APC/C is thought to confer substrate specificity and, in the presence of ubiquitin-conjugating E2 enzymes, it catalyzes the formation of protein-ubiquitin conjugates that are subsequently degraded by the 26S proteasome. Appears to play a role in spore wall formation. This chain is Anaphase-promoting complex subunit 14, found in Schizosaccharomyces pombe (strain 972 / ATCC 24843) (Fission yeast).